The sequence spans 309 residues: tRNA dimethylallyltransferase (309 aa).

9–16 (GPTAVGKT) contributes to the ATP binding site. 11-16 (TAVGKT) contributes to the substrate binding site. An interaction with substrate tRNA region spans residues 34–37 (DSMQ).

It belongs to the IPP transferase family. Monomer. Requires Mg(2+) as cofactor.

It catalyses the reaction adenosine(37) in tRNA + dimethylallyl diphosphate = N(6)-dimethylallyladenosine(37) in tRNA + diphosphate. Functionally, catalyzes the transfer of a dimethylallyl group onto the adenine at position 37 in tRNAs that read codons beginning with uridine, leading to the formation of N6-(dimethylallyl)adenosine (i(6)A). The sequence is that of tRNA dimethylallyltransferase from Enterococcus faecalis (strain ATCC 700802 / V583).